The sequence spans 1411 residues: Protein three rows (1411 aa).

Positions 1065 to 1071 (VEPIRKQ) are separase cleavage-site. Disordered stretches follow at residues 1221 to 1240 (LEPPSKPQNPRRALTFNISP), 1268 to 1301 (VRPASSTTSSSSSSSSSENASSPERKSTKSKSPK), and 1330 to 1411 (AKST…RHRN). Low complexity-rich tracts occupy residues 1270–1289 (PASSTTSSSSSSSSSENASS) and 1386–1398 (TAEQPTTTTTATP).

Interacts with pim and Sse. Cleavage of thr contributes to inactivation of Sse.

It localises to the cytoplasm. Its function is as follows. Required specifically for chromosome disjunction during all mitoses; maternally provided protein is sufficient until mitosis 14 then zygotic protein is required. Involved in formation and/or maintenance of epithelial structures: bud extension during Malpighian tubule development, and foregut and hindgut morphogenesis. The protein is Protein three rows (thr) of Drosophila virilis (Fruit fly).